The primary structure comprises 354 residues: Probable L-ascorbate-6-phosphate lactonase UlaG (354 aa).

This sequence belongs to the UlaG family. It depends on a divalent metal cation as a cofactor.

It localises to the cytoplasm. The catalysed reaction is L-ascorbate 6-phosphate + H2O = 3-dehydro-L-gulonate 6-phosphate. It functions in the pathway cofactor degradation; L-ascorbate degradation; D-xylulose 5-phosphate from L-ascorbate: step 1/4. Its function is as follows. Probably catalyzes the hydrolysis of L-ascorbate-6-P into 3-keto-L-gulonate-6-P. Is essential for L-ascorbate utilization under anaerobic conditions. The protein is Probable L-ascorbate-6-phosphate lactonase UlaG of Salmonella agona (strain SL483).